The following is a 180-amino-acid chain: Endoribonuclease YbeY (180 aa).

Zn(2+)-binding residues include histidine 118, histidine 122, and histidine 128.

It belongs to the endoribonuclease YbeY family. Requires Zn(2+) as cofactor.

It is found in the cytoplasm. In terms of biological role, single strand-specific metallo-endoribonuclease involved in late-stage 70S ribosome quality control and in maturation of the 3' terminus of the 16S rRNA. In Rhodococcus jostii (strain RHA1), this protein is Endoribonuclease YbeY.